The primary structure comprises 952 residues: Glutamate receptor 2.7 (952 aa).

The N-terminal stretch at 1 to 32 is a signal peptide; sequence MKVMNPRKTNNTFMYYFVLFVCGFVLMEGCLG. The Extracellular portion of the chain corresponds to 33–582; sequence QNQTTEIKVG…NTWVFLRPWS (550 aa). 5 N-linked (GlcNAc...) asparagine glycosylation sites follow: Asn34, Asn60, Asn355, Asn428, and Asn546. Residues 583–603 traverse the membrane as a helical segment; the sequence is LDLWVTTACFFVFIGFIVWIL. Over 604–612 the chain is Cytoplasmic; that stretch reads EHRVNTDFR. A helical membrane pass occupies residues 613-633; the sequence is GPPHHQIGTSFWFAFSTMNFA. Topologically, residues 634 to 637 are cytoplasmic; that stretch reads HREK. The chain crosses the membrane as a helical span at residues 638–658; that stretch reads VVSNLARFVVLVWCFVVLVLI. Residues 659–821 lie on the Extracellular side of the membrane; it reads QSYTANLTSF…LSSNHLSLSS (163 aa). N-linked (GlcNAc...) asparagine glycans are attached at residues Asn664, Asn728, Asn748, Asn784, and Asn809. Residues 822–842 traverse the membrane as a helical segment; that stretch reads FWGLFLIAGIASFLALLIFVA. The Cytoplasmic segment spans residues 843–952; the sequence is NFLYEHKHTL…ESAIIQCEGE (110 aa). Residues 889–908 are compositionally biased toward polar residues; it reads VSSPITQGSSSPLTDQSTPL. 2 disordered regions span residues 889 to 914 and 932 to 952; these read VSSP…SPEQ and FTTQ…CEGE.

It belongs to the glutamate-gated ion channel (TC 1.A.10.1) family. As to quaternary structure, may form heteromers. Expressed predominantly in leaves.

The protein localises to the membrane. In terms of biological role, glutamate-gated receptor that probably acts as a non-selective cation channel. May be involved in light-signal transduction and calcium homeostasis via the regulation of calcium influx into cells. The sequence is that of Glutamate receptor 2.7 (GLR2.7) from Arabidopsis thaliana (Mouse-ear cress).